Here is a 189-residue protein sequence, read N- to C-terminus: HGPRTase-like protein (189 aa).

The protein belongs to the purine/pyrimidine phosphoribosyltransferase family. Archaeal HPRT subfamily.

Functionally, may catalyze a purine salvage reaction, the substrate is unknown. The chain is HGPRTase-like protein from Halorhabdus utahensis (strain DSM 12940 / JCM 11049 / AX-2).